Consider the following 272-residue polypeptide: HMP-PP phosphatase (272 aa).

Aspartate 8 (nucleophile) is an active-site residue. Mg(2+) contacts are provided by aspartate 8, aspartate 10, and aspartate 212.

The protein belongs to the HAD-like hydrolase superfamily. Cof family. Mg(2+) serves as cofactor.

It carries out the reaction 4-amino-2-methyl-5-(diphosphooxymethyl)pyrimidine + H2O = 4-amino-2-methyl-5-(phosphooxymethyl)pyrimidine + phosphate + H(+). Functionally, catalyzes the hydrolysis of 4-amino-2-methyl-5-hydroxymethylpyrimidine pyrophosphate (HMP-PP) to 4-amino-2-methyl-5-hydroxymethylpyrimidine phosphate (HMP-P). The protein is HMP-PP phosphatase of Escherichia fergusonii (strain ATCC 35469 / DSM 13698 / CCUG 18766 / IAM 14443 / JCM 21226 / LMG 7866 / NBRC 102419 / NCTC 12128 / CDC 0568-73).